We begin with the raw amino-acid sequence, 156 residues long: D-aminoacyl-tRNA deacylase (156 aa).

A Gly-cisPro motif, important for rejection of L-amino acids motif is present at residues G142 to P143.

It belongs to the DTD family. As to quaternary structure, homodimer.

It is found in the cytoplasm. It carries out the reaction glycyl-tRNA(Ala) + H2O = tRNA(Ala) + glycine + H(+). The catalysed reaction is a D-aminoacyl-tRNA + H2O = a tRNA + a D-alpha-amino acid + H(+). An aminoacyl-tRNA editing enzyme that deacylates mischarged D-aminoacyl-tRNAs. Also deacylates mischarged glycyl-tRNA(Ala), protecting cells against glycine mischarging by AlaRS. Acts via tRNA-based rather than protein-based catalysis; rejects L-amino acids rather than detecting D-amino acids in the active site. By recycling D-aminoacyl-tRNA to D-amino acids and free tRNA molecules, this enzyme counteracts the toxicity associated with the formation of D-aminoacyl-tRNA entities in vivo and helps enforce protein L-homochirality. The sequence is that of D-aminoacyl-tRNA deacylase from Delftia acidovorans (strain DSM 14801 / SPH-1).